Here is a 198-residue protein sequence, read N- to C-terminus: Lipoprotein signal peptidase (198 aa).

Residues 1 to 34 (MDDERVSQDPTAENETDAEDRNDDDPSGSAPPQP) form a disordered region. Over residues 12–26 (AENETDAEDRNDDDP) the composition is skewed to acidic residues. A run of 3 helical transmembrane segments spans residues 42-62 (LLFV…ILAV), 92-112 (MATG…IGVV), and 120-140 (SPWW…NLVD). Catalysis depends on residues aspartate 155 and aspartate 169. Residues 167 to 187 (VADSGIVCGAILLVVLTLIGL) traverse the membrane as a helical segment.

The protein belongs to the peptidase A8 family.

Its subcellular location is the cell membrane. The enzyme catalyses Release of signal peptides from bacterial membrane prolipoproteins. Hydrolyzes -Xaa-Yaa-Zaa-|-(S,diacylglyceryl)Cys-, in which Xaa is hydrophobic (preferably Leu), and Yaa (Ala or Ser) and Zaa (Gly or Ala) have small, neutral side chains.. It functions in the pathway protein modification; lipoprotein biosynthesis (signal peptide cleavage). This protein specifically catalyzes the removal of signal peptides from prolipoproteins. The protein is Lipoprotein signal peptidase of Rhodococcus jostii (strain RHA1).